Here is a 314-residue protein sequence, read N- to C-terminus: Methionyl-tRNA formyltransferase (314 aa).

112–115 (SLLP) lines the (6S)-5,6,7,8-tetrahydrofolate pocket.

Belongs to the Fmt family.

It catalyses the reaction L-methionyl-tRNA(fMet) + (6R)-10-formyltetrahydrofolate = N-formyl-L-methionyl-tRNA(fMet) + (6S)-5,6,7,8-tetrahydrofolate + H(+). Its function is as follows. Attaches a formyl group to the free amino group of methionyl-tRNA(fMet). The formyl group appears to play a dual role in the initiator identity of N-formylmethionyl-tRNA by promoting its recognition by IF2 and preventing the misappropriation of this tRNA by the elongation apparatus. This chain is Methionyl-tRNA formyltransferase, found in Buchnera aphidicola subsp. Acyrthosiphon pisum (strain 5A).